Here is a 205-residue protein sequence, read N- to C-terminus: Glycerol-3-phosphate acyltransferase (205 aa).

5 helical membrane-spanning segments follow: residues 13–33 (LLAL…GLIL), 68–88 (LLLD…LWGY), 90–110 (ASLV…WLGF), 120–140 (IGVL…IWLA), and 147–167 (YSSL…WVLG).

Belongs to the PlsY family. As to quaternary structure, probably interacts with PlsX.

It localises to the cell inner membrane. The enzyme catalyses an acyl phosphate + sn-glycerol 3-phosphate = a 1-acyl-sn-glycero-3-phosphate + phosphate. The protein operates within lipid metabolism; phospholipid metabolism. In terms of biological role, catalyzes the transfer of an acyl group from acyl-phosphate (acyl-PO(4)) to glycerol-3-phosphate (G3P) to form lysophosphatidic acid (LPA). This enzyme utilizes acyl-phosphate as fatty acyl donor, but not acyl-CoA or acyl-ACP. The sequence is that of Glycerol-3-phosphate acyltransferase from Agrobacterium fabrum (strain C58 / ATCC 33970) (Agrobacterium tumefaciens (strain C58)).